We begin with the raw amino-acid sequence, 572 residues long: Urease subunit alpha (572 aa).

Residues 133–572 enclose the Urease domain; sequence GGIDLHVHYI…TSLSQRYFLF (440 aa). 3 residues coordinate Ni(2+): His-138, His-140, and Lys-221. N6-carboxylysine is present on Lys-221. Position 223 (His-223) interacts with substrate. Ni(2+)-binding residues include His-250 and His-276. His-324 (proton donor) is an active-site residue. Asp-364 contributes to the Ni(2+) binding site.

Belongs to the metallo-dependent hydrolases superfamily. Urease alpha subunit family. In terms of assembly, heterotrimer of UreA (gamma), UreB (beta) and UreC (alpha) subunits. Three heterotrimers associate to form the active enzyme. Ni cation is required as a cofactor. Carboxylation allows a single lysine to coordinate two nickel ions.

The protein resides in the cytoplasm. It carries out the reaction urea + 2 H2O + H(+) = hydrogencarbonate + 2 NH4(+). It participates in nitrogen metabolism; urea degradation; CO(2) and NH(3) from urea (urease route): step 1/1. Its function is as follows. Ureolysis may allow urea to be employed as a nitrogen source for growth and produces ammonia which may protect from killing at low pH. In Streptococcus salivarius (strain 57.I), this protein is Urease subunit alpha.